The sequence spans 61 residues: Small ribosomal subunit protein uS14 (61 aa).

Zn(2+) contacts are provided by Cys24, Cys27, Cys40, and Cys43.

Belongs to the universal ribosomal protein uS14 family. Zinc-binding uS14 subfamily. In terms of assembly, part of the 30S ribosomal subunit. Contacts proteins S3 and S10. It depends on Zn(2+) as a cofactor.

Binds 16S rRNA, required for the assembly of 30S particles and may also be responsible for determining the conformation of the 16S rRNA at the A site. This Thermobifida fusca (strain YX) protein is Small ribosomal subunit protein uS14.